The chain runs to 382 residues: ATP phosphoribosyltransferase regulatory subunit (382 aa).

The protein belongs to the class-II aminoacyl-tRNA synthetase family. HisZ subfamily. In terms of assembly, heteromultimer composed of HisG and HisZ subunits.

The protein localises to the cytoplasm. It participates in amino-acid biosynthesis; L-histidine biosynthesis; L-histidine from 5-phospho-alpha-D-ribose 1-diphosphate: step 1/9. In terms of biological role, required for the first step of histidine biosynthesis. May allow the feedback regulation of ATP phosphoribosyltransferase activity by histidine. In Verminephrobacter eiseniae (strain EF01-2), this protein is ATP phosphoribosyltransferase regulatory subunit.